The following is a 410-amino-acid chain: LL-diaminopimelate aminotransferase (410 aa).

2 residues coordinate substrate: Tyr-15 and Gly-42. Pyridoxal 5'-phosphate-binding positions include Tyr-72, 108–109 (AK), Tyr-132, Asn-187, Tyr-218, and 246–248 (SFS). The substrate site is built by Lys-109, Tyr-132, and Asn-187. N6-(pyridoxal phosphate)lysine is present on Lys-249. Positions 257 and 292 each coordinate pyridoxal 5'-phosphate. The substrate site is built by Asn-292 and Arg-388.

It belongs to the class-I pyridoxal-phosphate-dependent aminotransferase family. LL-diaminopimelate aminotransferase subfamily. As to quaternary structure, homodimer. Pyridoxal 5'-phosphate serves as cofactor.

The catalysed reaction is (2S,6S)-2,6-diaminopimelate + 2-oxoglutarate = (S)-2,3,4,5-tetrahydrodipicolinate + L-glutamate + H2O + H(+). It participates in amino-acid biosynthesis; L-lysine biosynthesis via DAP pathway; LL-2,6-diaminopimelate from (S)-tetrahydrodipicolinate (aminotransferase route): step 1/1. In terms of biological role, involved in the synthesis of meso-diaminopimelate (m-DAP or DL-DAP), required for both lysine and peptidoglycan biosynthesis. Catalyzes the direct conversion of tetrahydrodipicolinate to LL-diaminopimelate. Is also able to catalyze the reverse reaction in vitro, i.e. the transamination of LL-diaminopimelate with 2-oxoglutarate to produce 2-oxo-6-aminopimelate (in equilibrium with tetrahydrodipicolinate) and glutamate. Has maximal aminotransferase activity using 2-oxoglutarate as an amino group acceptor, and cannot use oxaloacetate instead of 2-oxoglutarate, although 2-oxoadipate can substitute with 21% relative activity. Cannot use m-DAP, lysine or ornithine as the amino-group donor, when using 2-oxoglutarate as the amino-group acceptor. The polypeptide is LL-diaminopimelate aminotransferase (Methanothermobacter thermautotrophicus (strain ATCC 29096 / DSM 1053 / JCM 10044 / NBRC 100330 / Delta H) (Methanobacterium thermoautotrophicum)).